The primary structure comprises 154 residues: Cyclin-dependent protein kinase inhibitor SMR11 (154 aa).

A disordered region spans residues 1 to 44; that stretch reads MEQEEPCEAKETASSSIEPKTPNPNVPDSIPAIDSDSSLSEEEI. The segment covering 27 to 38 has biased composition (low complexity); sequence PDSIPAIDSDSS.

As to quaternary structure, interacts with CYCB2-4.

In terms of biological role, probable cyclin-dependent protein kinase (CDK) inhibitor that functions as a repressor of mitosis in the endoreduplication cell cycle. The polypeptide is Cyclin-dependent protein kinase inhibitor SMR11 (Arabidopsis thaliana (Mouse-ear cress)).